We begin with the raw amino-acid sequence, 209 residues long: Inorganic pyrophosphatase (209 aa).

Residues K38, R52, and Y64 each contribute to the substrate site. The Mg(2+) site is built by D92, D97, and D130. Y167 contacts substrate.

It belongs to the PPase family. Homohexamer. Mg(2+) is required as a cofactor.

The protein resides in the cytoplasm. It carries out the reaction diphosphate + H2O = 2 phosphate + H(+). Functionally, catalyzes the hydrolysis of inorganic pyrophosphate (PPi) forming two phosphate ions. The polypeptide is Inorganic pyrophosphatase (Chlamydia muridarum (strain MoPn / Nigg)).